Here is a 215-residue protein sequence, read N- to C-terminus: HTH-type transcriptional repressor FabR (215 aa).

Residues 10 to 70 form the HTH tetR-type domain; the sequence is KTRRSLVEAA…TMVDESGLML (61 aa). Residues 33-52 constitute a DNA-binding region (H-T-H motif); it reads SLREVAREAGIAPTSFYRHF.

Homodimer.

Its subcellular location is the cytoplasm. In terms of biological role, represses the transcription of fabB, involved in unsaturated fatty acid (UFA) biosynthesis. By controlling UFA production, FabR directly influences the physical properties of the membrane bilayer. The polypeptide is HTH-type transcriptional repressor FabR (Escherichia coli O139:H28 (strain E24377A / ETEC)).